The chain runs to 192 residues: Transcriptional activator GvpE (192 aa).

Lysine 140 to arginine 145 serves as a coordination point for DNA. Positions glutamate 150–tyrosine 181 are leucine-zipper.

In terms of assembly, interacts with GvpD, also with c-GvpD from H.salinarum.

It localises to the cytoplasm. Its activity is regulated as follows. The amount of protein that accumulates is controlled by GvpD; GvpD causes a reduction in the amount of GvpE, preventing accumulation of excessive amounts of gas vesicles. In terms of biological role, plays a regulatory role in gas vesicle synthesis, activates transcription of the gvpA operon, and probably of the gvpD operon. Gas vesicles are hollow, gas filled proteinaceous nanostructures found in some microorganisms. They allow positioning of halobacteria at the optimal depth for growth in the poorly aerated, shallow brine pools of their habitat. Expression of a 9.5 kb mc-vac DNA fragment containing 2 divergently transcribed regions (gvpD-gvpE-gvpF-gvpG-gvpH-gvpI-gvpJ-gvpK-gvpL-gvpM and gvpA-gvpC-gvpN-gvpO) allows H.volcanii to produce gas vesicles. This Haloferax mediterranei (strain ATCC 33500 / DSM 1411 / JCM 8866 / NBRC 14739 / NCIMB 2177 / R-4) (Halobacterium mediterranei) protein is Transcriptional activator GvpE.